The following is a 299-amino-acid chain: Probable alpha-L-glutamate ligase (299 aa).

An ATP-grasp domain is found at 111–293; the sequence is LQALAAANIA…VATQMIAYLE (183 aa). ATP-binding positions include Lys-147, 184-185, Asp-193, and 217-219; these read DF and RAN. The Mg(2+) site is built by Asp-254, Glu-266, and Asn-268. Mn(2+)-binding residues include Asp-254, Glu-266, and Asn-268.

Belongs to the RimK family. The cofactor is Mg(2+). Mn(2+) is required as a cofactor.

The chain is Probable alpha-L-glutamate ligase from Mannheimia succiniciproducens (strain KCTC 0769BP / MBEL55E).